A 319-amino-acid polypeptide reads, in one-letter code: Beta-ketoacyl-[acyl-carrier-protein] synthase III (319 aa).

Active-site residues include Cys112 and His246. The tract at residues 247–251 (QANKR) is ACP-binding. The active site involves Asn276.

It belongs to the thiolase-like superfamily. FabH family. In terms of assembly, homodimer.

It localises to the cytoplasm. The catalysed reaction is malonyl-[ACP] + acetyl-CoA + H(+) = 3-oxobutanoyl-[ACP] + CO2 + CoA. Its pathway is lipid metabolism; fatty acid biosynthesis. Catalyzes the condensation reaction of fatty acid synthesis by the addition to an acyl acceptor of two carbons from malonyl-ACP. Catalyzes the first condensation reaction which initiates fatty acid synthesis and may therefore play a role in governing the total rate of fatty acid production. Possesses both acetoacetyl-ACP synthase and acetyl transacylase activities. Its substrate specificity determines the biosynthesis of branched-chain and/or straight-chain of fatty acids. In Psychromonas ingrahamii (strain DSM 17664 / CCUG 51855 / 37), this protein is Beta-ketoacyl-[acyl-carrier-protein] synthase III.